A 266-amino-acid chain; its full sequence is Bidirectional sugar transporter SWEET7b (266 aa).

Residues 1 to 9 (MVSPDLIRN) lie on the Extracellular side of the membrane. A helical membrane pass occupies residues 10–30 (MVGIVGNIISFGLFLSPVPTF). The region spanning 10 to 97 (MVGIVGNIIS…TIFFLFSDKK (88 aa)) is the MtN3/slv 1 domain. Residues 31–45 (YRIIKNKDVQDFKAD) are Cytoplasmic-facing. A helical membrane pass occupies residues 46–66 (PYLATLLNCMLWVFYGLPIVH). Over 67 to 69 (PNS) the chain is Extracellular. The helical transmembrane segment at 70 to 90 (ILVVTINGIGLIIEAVYLTIF) threads the bilayer. Topologically, residues 91-101 (FLFSDKKNKKK) are cytoplasmic. A helical membrane pass occupies residues 102 to 122 (MGVVLATEALFMAAVVLGVLL). Topologically, residues 123–131 (GAHTHQRRS) are extracellular. Residues 132-152 (LIVGILCAIFGTIMYSSPLTI) traverse the membrane as a helical segment. The 84-residue stretch at 133 to 216 (IVGILCAIFG…LILYAIYYRT (84 aa)) folds into the MtN3/slv 2 domain. Residues 153–165 (MSQVVKTKSVEYM) are Cytoplasmic-facing. Residues 166–186 (PLLLSVVSFLNGLCWTSYALI) form a helical membrane-spanning segment. Residues 187–189 (RLD) are Extracellular-facing. A helical membrane pass occupies residues 190–210 (IFITIPNGLGVLFALMQLILY). The Cytoplasmic portion of the chain corresponds to 211–266 (AIYYRTTPKKQDKNLELPTVAPVAKDTSIVTPVSKDDDVVDGGNASHVTINITIEP).

Belongs to the SWEET sugar transporter family. Forms homooligomers and/or heterooligomers.

It is found in the cell membrane. In terms of biological role, mediates both low-affinity uptake and efflux of sugar across the plasma membrane. In Oryza sativa subsp. indica (Rice), this protein is Bidirectional sugar transporter SWEET7b (SWEET7B).